The primary structure comprises 151 residues: Putative pre-16S rRNA nuclease (151 aa).

It belongs to the YqgF nuclease family.

The protein resides in the cytoplasm. Its function is as follows. Could be a nuclease involved in processing of the 5'-end of pre-16S rRNA. The chain is Putative pre-16S rRNA nuclease from Methylococcus capsulatus (strain ATCC 33009 / NCIMB 11132 / Bath).